Reading from the N-terminus, the 933-residue chain is Isoleucine--tRNA ligase (933 aa).

Residues 57–67 (PYANGNIHVGH) carry the 'HIGH' region motif. Glutamate 554 contributes to the L-isoleucyl-5'-AMP binding site. Residues 595–599 (KMSKS) carry the 'KMSKS' region motif. An ATP-binding site is contributed by lysine 598.

It belongs to the class-I aminoacyl-tRNA synthetase family. IleS type 1 subfamily. As to quaternary structure, monomer.

Its subcellular location is the cytoplasm. The catalysed reaction is tRNA(Ile) + L-isoleucine + ATP = L-isoleucyl-tRNA(Ile) + AMP + diphosphate. In terms of biological role, catalyzes the attachment of isoleucine to tRNA(Ile). As IleRS can inadvertently accommodate and process structurally similar amino acids such as valine, to avoid such errors it has two additional distinct tRNA(Ile)-dependent editing activities. One activity is designated as 'pretransfer' editing and involves the hydrolysis of activated Val-AMP. The other activity is designated 'posttransfer' editing and involves deacylation of mischarged Val-tRNA(Ile). This Streptococcus pyogenes serotype M6 (strain ATCC BAA-946 / MGAS10394) protein is Isoleucine--tRNA ligase.